We begin with the raw amino-acid sequence, 103 residues long: Histone H4, minor (103 aa).

Positions 1–12 (MAGGKGGKGMGK) are enriched in gly residues. Residues 1-29 (MAGGKGGKGMGKVGAKRHSRKSNKASIEG) are disordered. An N6-acetyllysine mark is found at Lys-5, Lys-8, Lys-12, and Lys-16. A compositionally biased stretch (basic residues) spans 14–23 (GAKRHSRKSN). The DNA-binding element occupies 16 to 21 (KRHSRK).

Belongs to the histone H4 family. The nucleosome is a histone octamer containing two molecules each of H2A, H2B, H3 and H4 assembled in one H3-H4 heterotetramer and two H2A-H2B heterodimers. The octamer wraps approximately 147 bp of DNA.

The protein resides in the nucleus. It localises to the chromosome. Core component of nucleosome. Nucleosomes wrap and compact DNA into chromatin, limiting DNA accessibility to the cellular machineries which require DNA as a template. Histones thereby play a central role in transcription regulation, DNA repair, DNA replication and chromosomal stability. DNA accessibility is regulated via a complex set of post-translational modifications of histones, also called histone code, and nucleosome remodeling. In Tetrahymena pyriformis, this protein is Histone H4, minor.